The following is a 164-amino-acid chain: FMN reductase (NADH) RutF (164 aa).

The protein belongs to the non-flavoprotein flavin reductase family. RutF subfamily.

It carries out the reaction FMNH2 + NAD(+) = FMN + NADH + 2 H(+). Its function is as follows. Catalyzes the reduction of FMN to FMNH2 which is used to reduce pyrimidine by RutA via the Rut pathway. This Enterobacter sp. (strain 638) protein is FMN reductase (NADH) RutF.